The chain runs to 121 residues: uncharacterized protein (121 aa).

The helical transmembrane segment at 11-31 threads the bilayer; the sequence is IFQFFVFPFYYFLLIITEIGF.

The protein localises to the membrane. This is an uncharacterized protein from Schizosaccharomyces pombe (strain 972 / ATCC 24843) (Fission yeast).